Reading from the N-terminus, the 469-residue chain is Neuraminidase (469 aa).

The Intravirion portion of the chain corresponds to 1–9 (MNPNQKIIT). A helical transmembrane segment spans residues 10–30 (IGSVSLTIATICFLMQIAILV). Residues 11–33 (GSVSLTIATICFLMQIAILVTTV) are involved in apical transport and lipid raft association. Residues 31–469 (TTVTLHFKQY…DGADINLMPI (439 aa)) lie on the Virion surface side of the membrane. The segment at 36-88 (HFKQYECDSPANNQVMPCEPIIIERNITEIVYLTNTTIEKEICPKLVEYRNWS) is hypervariable stalk region. Residues Asn-61, Asn-70, and Asn-86 are each glycosylated (N-linked (GlcNAc...) asparagine; by host). Residues 91–469 (QCKITGFAPF…DGADINLMPI (379 aa)) are head of neuraminidase. Disulfide bonds link Cys-92-Cys-417, Cys-124-Cys-129, Cys-183-Cys-230, Cys-232-Cys-237, Cys-278-Cys-291, Cys-280-Cys-289, Cys-318-Cys-337, and Cys-421-Cys-447. Arg-118 lines the substrate pocket. Residue Asn-146 is glycosylated (N-linked (GlcNAc...) asparagine; by host). Catalysis depends on Asp-151, which acts as the Proton donor/acceptor. A substrate-binding site is contributed by Arg-152. Residues Asn-200 and Asn-234 are each glycosylated (N-linked (GlcNAc...) asparagine; by host). 276–277 (EE) is a substrate binding site. Arg-292 contacts substrate. Ca(2+) is bound by residues Asp-293, Gly-297, and Asp-324. Substrate is bound at residue Arg-371. Asn-402 carries N-linked (GlcNAc...) asparagine; by host glycosylation. Residue Tyr-406 is the Nucleophile of the active site.

It belongs to the glycosyl hydrolase 34 family. In terms of assembly, homotetramer. Ca(2+) is required as a cofactor. N-glycosylated.

It is found in the virion membrane. The protein resides in the host apical cell membrane. The catalysed reaction is Hydrolysis of alpha-(2-&gt;3)-, alpha-(2-&gt;6)-, alpha-(2-&gt;8)- glycosidic linkages of terminal sialic acid residues in oligosaccharides, glycoproteins, glycolipids, colominic acid and synthetic substrates.. Its activity is regulated as follows. Inhibited by the neuraminidase inhibitors zanamivir (Relenza) and oseltamivir (Tamiflu). These drugs interfere with the release of progeny virus from infected cells and are effective against all influenza strains. Resistance to neuraminidase inhibitors is quite rare. Functionally, catalyzes the removal of terminal sialic acid residues from viral and cellular glycoconjugates. Cleaves off the terminal sialic acids on the glycosylated HA during virus budding to facilitate virus release. Additionally helps virus spread through the circulation by further removing sialic acids from the cell surface. These cleavages prevent self-aggregation and ensure the efficient spread of the progeny virus from cell to cell. Otherwise, infection would be limited to one round of replication. Described as a receptor-destroying enzyme because it cleaves a terminal sialic acid from the cellular receptors. May facilitate viral invasion of the upper airways by cleaving the sialic acid moieties on the mucin of the airway epithelial cells. Likely to plays a role in the budding process through its association with lipid rafts during intracellular transport. May additionally display a raft-association independent effect on budding. Plays a role in the determination of host range restriction on replication and virulence. Sialidase activity in late endosome/lysosome traffic seems to enhance virus replication. This chain is Neuraminidase, found in Influenza A virus (strain A/Udorn/307/1972 H3N2).